Reading from the N-terminus, the 443-residue chain is Protein SCAR (443 aa).

Residues 1–96 (MVLITRYLPS…DYHRNTSIDT (96 aa)) form an interaction with brk1 and abiA region. A coiled-coil region spans residues 166–201 (VAEQQKLHEEARQRKRERREARLKKKGEKNEVEVKK). Disordered stretches follow at residues 176–197 (ARQR…KNEV) and 220–386 (INIE…RSDL). Residues 178–192 (QRKRERREARLKKKG) show a composition bias toward basic residues. A compositionally biased stretch (polar residues) spans 221-252 (NIESPHTSSPQIQHQSNNTATPQHTTQHFGTN). 2 stretches are compositionally biased toward low complexity: residues 263 to 277 (SQSS…INSY) and 285 to 305 (NTST…TGFN). Residues 306–323 (TPPPPMSNNNNMPPPPPM) show a composition bias toward pro residues. Residues 324–338 (QQNGGAANNRLSVHN) are compositionally biased toward polar residues. Residues 346–365 (PAPPPPPPPPSAPAPPPPPM) show a composition bias toward pro residues. A WH2 domain is found at 382-399 (ARSDLLSSIMQGMALKPA).

The protein belongs to the SCAR/WAVE family. Part of a Scar/WAVE complex containing brk1, scrA, abiA, pirA and napA. Interacts with brk1 and abiA.

It is found in the cytoplasm. The protein localises to the cytoskeleton. It localises to the cell projection. Its subcellular location is the pseudopodium tip. The protein resides in the filopodium tip. Involved in regulation of actin and microtubule organization. Regulates phagocytosis and macropinocytosis. The polypeptide is Protein SCAR (scrA) (Dictyostelium discoideum (Social amoeba)).